Here is a 329-residue protein sequence, read N- to C-terminus: Transmembrane protein I329L (329 aa).

The signal sequence occupies residues 1-31; it reads MLRVFIFFVFLGSGLAGKVKSPITCKYFISK. Residues Asn-32, Asn-39, Asn-44, Asn-58, Asn-76, Asn-82, Asn-101, Asn-185, and Asn-219 are each glycosylated (N-linked (GlcNAc...) asparagine; by host). The Extracellular portion of the chain corresponds to 32–239; the sequence is NNTWYKYNVT…NTERYKNCYP (208 aa). A helical membrane pass occupies residues 240–260; the sequence is FVLVSIICSCISSLFLLICLL. Residues 261–329 are Cytoplasmic-facing; that stretch reads RTICKKYSCT…EKKVSCSRRK (69 aa).

It belongs to the asfivirus I329L family. Highly glycosylated.

The protein localises to the host endoplasmic reticulum membrane. Its subcellular location is the host Golgi apparatus membrane. Functionally, viral TLR3 homolog that probably prevents TLR3 dimerization and subsequent induction of IFN. Inhibits dsRNA-stimulated activation of NF-kB and IRF3. This chain is Transmembrane protein I329L, found in Ornithodoros (relapsing fever ticks).